Consider the following 66-residue polypeptide: DNA-directed RNA polymerase subunit Rpo10 (66 aa).

The Zn(2+) site is built by Cys7, Cys10, Cys47, and Cys48.

This sequence belongs to the archaeal Rpo10/eukaryotic RPB10 RNA polymerase subunit family. In terms of assembly, part of the RNA polymerase complex. The cofactor is Zn(2+).

The protein resides in the cytoplasm. It catalyses the reaction RNA(n) + a ribonucleoside 5'-triphosphate = RNA(n+1) + diphosphate. Its function is as follows. DNA-dependent RNA polymerase (RNAP) catalyzes the transcription of DNA into RNA using the four ribonucleoside triphosphates as substrates. In Haloarcula marismortui (strain ATCC 43049 / DSM 3752 / JCM 8966 / VKM B-1809) (Halobacterium marismortui), this protein is DNA-directed RNA polymerase subunit Rpo10.